The sequence spans 427 residues: Serine--tRNA ligase (427 aa).

231–233 is an L-serine binding site; that stretch reads TAE. Residue 262-264 coordinates ATP; the sequence is RSE. Glu285 contacts L-serine. Position 349 to 352 (349 to 352) interacts with ATP; that stretch reads EISS. Ser385 serves as a coordination point for L-serine.

It belongs to the class-II aminoacyl-tRNA synthetase family. Type-1 seryl-tRNA synthetase subfamily. As to quaternary structure, homodimer. The tRNA molecule binds across the dimer.

It localises to the cytoplasm. The catalysed reaction is tRNA(Ser) + L-serine + ATP = L-seryl-tRNA(Ser) + AMP + diphosphate + H(+). The enzyme catalyses tRNA(Sec) + L-serine + ATP = L-seryl-tRNA(Sec) + AMP + diphosphate + H(+). Its pathway is aminoacyl-tRNA biosynthesis; selenocysteinyl-tRNA(Sec) biosynthesis; L-seryl-tRNA(Sec) from L-serine and tRNA(Sec): step 1/1. In terms of biological role, catalyzes the attachment of serine to tRNA(Ser). Is also able to aminoacylate tRNA(Sec) with serine, to form the misacylated tRNA L-seryl-tRNA(Sec), which will be further converted into selenocysteinyl-tRNA(Sec). The polypeptide is Serine--tRNA ligase (Rhizobium leguminosarum bv. trifolii (strain WSM2304)).